The chain runs to 535 residues: Probable glucomannan 4-beta-mannosyltransferase 14 (535 aa).

The helical transmembrane segment at 42 to 62 (QVVSVLLFVDAAYMAIVVAIV) threads the bilayer. Residue Asp-131 is part of the active site. Asp-193 and Asp-195 together coordinate substrate. The active site involves Asp-287. Transmembrane regions (helical) follow at residues 366 to 386 (IVVH…TVIF), 403 to 423 (ITIL…YWIL), 482 to 502 (IMVG…GRTY), and 503 to 523 (LYVY…GYVG).

Belongs to the glycosyltransferase 2 family. Plant cellulose synthase-like A subfamily.

It localises to the golgi apparatus membrane. The catalysed reaction is GDP-mannose + (glucomannan)n = GDP + (glucomannan)n+1.. Probable mannan synthase which consists of a 4-beta-mannosyltransferase activity on mannan using GDP-mannose. The beta-1,4-mannan product is the backbone for galactomannan synthesis by galactomannan galactosyltransferase. Galactomannan is a noncellulosic polysaccharides of plant cell wall. The chain is Probable glucomannan 4-beta-mannosyltransferase 14 from Arabidopsis thaliana (Mouse-ear cress).